We begin with the raw amino-acid sequence, 323 residues long: Galactosylgalactosylxylosylprotein 3-beta-glucuronosyltransferase 2 (323 aa).

Residues 1 to 2 (MK) lie on the Cytoplasmic side of the membrane. Residues 3–23 (SALFTRFFILLPWILIVIIML) traverse the membrane as a helical; Signal-anchor for type II membrane protein segment. Over 24–323 (DVDTRRPVPP…YHLDTVKIEV (300 aa)) the chain is Lumenal. The tract at residues 51 to 80 (RLPLRRGGPAHGTQKRNQSRPQPQPEPQLP) is disordered. Residue Asn67 is glycosylated (N-linked (GlcNAc...) asparagine). UDP-alpha-D-glucuronate contacts are provided by residues 87–89 (PTY), Asp118, Arg155, Arg160, and 185–187 (DDD). Position 187 (Asp187) interacts with Mn(2+). Positions 234-243 (WRADRPFAID) are interaction with galactose moiety of substrate glycoprotein. The active-site Proton donor/acceptor is Glu273. The N-linked (GlcNAc...) asparagine glycan is linked to Asn292. 300–302 (HTR) is a binding site for UDP-alpha-D-glucuronate.

The protein belongs to the glycosyltransferase 43 family. Homodimer. Mn(2+) serves as cofactor. As to expression, expressed in the trachea, retina, spinal cord, hippocampus and other brain regions, and, at lower levels, in testis and ovary.

The protein resides in the golgi apparatus membrane. It carries out the reaction 3-O-(beta-D-galactosyl-(1-&gt;3)-beta-D-galactosyl-(1-&gt;4)-beta-D-xylosyl)-L-seryl-[protein] + UDP-alpha-D-glucuronate = 3-O-(beta-D-GlcA-(1-&gt;3)-beta-D-Gal-(1-&gt;3)-beta-D-Gal-(1-&gt;4)-beta-D-Xyl)-L-seryl-[protein] + UDP + H(+). It functions in the pathway protein modification; protein glycosylation. Involved in the biosynthesis of L2/HNK-1 carbohydrate epitope on both glycolipids and glycoproteins. The sequence is that of Galactosylgalactosylxylosylprotein 3-beta-glucuronosyltransferase 2 (B3GAT2) from Homo sapiens (Human).